A 75-amino-acid chain; its full sequence is Small ribosomal subunit protein bS18 (75 aa).

It belongs to the bacterial ribosomal protein bS18 family. In terms of assembly, part of the 30S ribosomal subunit. Forms a tight heterodimer with protein bS6.

Binds as a heterodimer with protein bS6 to the central domain of the 16S rRNA, where it helps stabilize the platform of the 30S subunit. In Photobacterium profundum (strain SS9), this protein is Small ribosomal subunit protein bS18.